The sequence spans 224 residues: Ribonuclease 3 (224 aa).

The 123-residue stretch at 5 to 127 (LERLCRRLNY…ILAAIYLDGG (123 aa)) folds into the RNase III domain. A Mg(2+)-binding site is contributed by Glu40. Asp44 is an active-site residue. Positions 113 and 116 each coordinate Mg(2+). Glu116 is an active-site residue. Residues 154-224 (DAKTQLQEFL…AKAMLEQLQG (71 aa)) form the DRBM domain.

The protein belongs to the ribonuclease III family. Homodimer. The cofactor is Mg(2+).

The protein localises to the cytoplasm. The catalysed reaction is Endonucleolytic cleavage to 5'-phosphomonoester.. In terms of biological role, digests double-stranded RNA. Involved in the processing of primary rRNA transcript to yield the immediate precursors to the large and small rRNAs (23S and 16S). Processes some mRNAs, and tRNAs when they are encoded in the rRNA operon. Processes pre-crRNA and tracrRNA of type II CRISPR loci if present in the organism. The protein is Ribonuclease 3 of Legionella pneumophila (strain Paris).